A 472-amino-acid chain; its full sequence is Carboxypeptidase Q (472 aa).

The N-terminal stretch at 1–20 is a signal peptide; that stretch reads MKFLLFMFVGVVHLLPLASG. A propeptide spanning residues 21–44 is cleaved from the precursor; it reads KAIYGNGPSQRTFQEIKEEIAHYG. Residues Asn-52, Asn-61, and Asn-179 are each glycosylated (N-linked (GlcNAc...) asparagine). 2 residues coordinate Zn(2+): His-290 and Asp-302. Residue Glu-336 is the Nucleophile of the active site. Glu-337 serves as a coordination point for Zn(2+). N-linked (GlcNAc...) asparagine glycans are attached at residues Asn-353 and Asn-356. A Zn(2+)-binding site is contributed by Asp-364. An N-linked (GlcNAc...) asparagine glycan is attached at Asn-396. His-434 contributes to the Zn(2+) binding site.

Belongs to the peptidase M28 family. As to quaternary structure, homodimer. The monomeric form is inactive while the homodimer is active. N-glycosylated. The secreted form is modified by hybrid or complex type oligosaccharide chains.

Its subcellular location is the endoplasmic reticulum. It localises to the golgi apparatus. The protein resides in the lysosome. It is found in the secreted. Functionally, carboxypeptidase that may play an important role in the hydrolysis of circulating peptides. Catalyzes the hydrolysis of dipeptides with unsubstituted terminals into amino acids. May play a role in the liberation of thyroxine hormone from its thyroglobulin (Tg) precursor. This chain is Carboxypeptidase Q (CPQ), found in Bos taurus (Bovine).